We begin with the raw amino-acid sequence, 145 residues long: Maximins 3/H11 type 3 (145 aa).

Residues 1 to 18 (MNFKYIVAVSFLIASAYA) form the signal peptide. Propeptides lie at residues 19-43 (RSVQ…LREI) and 75-122 (TAEE…TKKE). Position 144 is an isoleucine amide (Ile144).

The protein belongs to the bombinin family. Expressed by the skin glands.

It localises to the secreted. Maximin-3 shows antibacterial activity against both Gram-positive and Gram-negative bacteria. It also shows antimicrobial activity against the fungus C.albicans, but not against A.flavus nor P.uticale. It has little hemolytic activity. It possess a significant cytotoxicity against tumor cell lines. It possess a significant anti-HIV activity. It shows high spermicidal activity. Its function is as follows. Maximin-H11 shows antimicrobial activity against bacteria and against the fungus C.albicans. Shows strong hemolytic activity. This is Maximins 3/H11 type 3 from Bombina maxima (Giant fire-bellied toad).